A 223-amino-acid polypeptide reads, in one-letter code: Ribosomal RNA small subunit methyltransferase Nep1 (223 aa).

S-adenosyl-L-methionine contacts are provided by residues glycine 181, glycine 186, and 199–204; that span reads LYREPL.

Belongs to the class IV-like SAM-binding methyltransferase superfamily. RNA methyltransferase NEP1 family. In terms of assembly, homodimer.

The enzyme catalyses a pseudouridine in rRNA + S-adenosyl-L-methionine = an N(1)-methylpseudouridine in rRNA + S-adenosyl-L-homocysteine + H(+). In terms of biological role, methyltransferase involved in ribosomal biogenesis. Specifically catalyzes the N1-methylation of the pseudouridine corresponding to position 914 in M.jannaschii 16S rRNA. In Pyrococcus furiosus (strain ATCC 43587 / DSM 3638 / JCM 8422 / Vc1), this protein is Ribosomal RNA small subunit methyltransferase Nep1.